The chain runs to 484 residues: BPI fold-containing family B member 1 (484 aa).

Residues 1–21 (MAGPWTFTLLCGLLAATLIQA) form the signal peptide. Residue asparagine 48 is glycosylated (N-linked (GlcNAc...) asparagine). The cysteines at positions 158 and 201 are disulfide-linked. Asparagine 264 and asparagine 401 each carry an N-linked (GlcNAc...) asparagine glycan.

The protein belongs to the BPI/LBP/Plunc superfamily. Plunc family. Detected in duodenum mucosal crypts of cholera patients, near Paneth cells (at protein level). Detected in trachea, nasal septal epithelium and lung.

It localises to the secreted. May play a role in innate immunity in mouth, nose and lungs. Binds bacterial lipopolysaccharide (LPS) and modulates the cellular responses to LPS. The protein is BPI fold-containing family B member 1 (BPIFB1) of Homo sapiens (Human).